Here is a 301-residue protein sequence, read N- to C-terminus: Probable cyclic nucleotide phosphodiesterase RER_40650 (301 aa).

Positions 20, 22, 61, 95, 167, 205, and 207 each coordinate Fe cation. Residues H22, D61, and 95 to 96 each bind AMP; that span reads NH. H207 is a binding site for AMP.

It belongs to the cyclic nucleotide phosphodiesterase class-III family. Requires Fe(2+) as cofactor.

In Rhodococcus erythropolis (strain PR4 / NBRC 100887), this protein is Probable cyclic nucleotide phosphodiesterase RER_40650.